Reading from the N-terminus, the 372-residue chain is tRNA-specific 2-thiouridylase MnmA (372 aa).

Residues 16–23 (GMSGGVDS) and Met-42 contribute to the ATP site. Residues 102-104 (NPD) form an interaction with target base in tRNA region. The active-site Nucleophile is the Cys-107. Cysteines 107 and 205 form a disulfide. Gly-132 contacts ATP. Residues 155–157 (KDQ) are interaction with tRNA. Residue Cys-205 is the Cysteine persulfide intermediate of the active site. An interaction with tRNA region spans residues 317-318 (RY).

This sequence belongs to the MnmA/TRMU family.

Its subcellular location is the cytoplasm. It carries out the reaction S-sulfanyl-L-cysteinyl-[protein] + uridine(34) in tRNA + AH2 + ATP = 2-thiouridine(34) in tRNA + L-cysteinyl-[protein] + A + AMP + diphosphate + H(+). In terms of biological role, catalyzes the 2-thiolation of uridine at the wobble position (U34) of tRNA, leading to the formation of s(2)U34. This Shewanella sp. (strain W3-18-1) protein is tRNA-specific 2-thiouridylase MnmA.